The sequence spans 74 residues: Probable molt-inhibiting hormone (74 aa).

Disulfide bonds link cysteine 6-cysteine 43, cysteine 23-cysteine 39, and cysteine 26-cysteine 52. The residue at position 74 (alanine 74) is an Alanine amide.

The protein localises to the secreted. In terms of biological role, inhibits Y-organs where molting hormone (ecdysteroid) is secreted. A molting cycle is initiated when MIH secretion diminishes or stops. Has little or no hyperglycemic activity. The sequence is that of Probable molt-inhibiting hormone from Jasus lalandii (Cape rock lobster).